The chain runs to 238 residues: E3 ubiquitin-protein ligase ZNRF2 (238 aa).

Positions 1–137 are disordered; sequence MGAKQSGPAA…AGGGPGGPRL (137 aa). G2 carries N-myristoyl glycine lipidation. A phosphoserine mark is found at S20, S24, S75, S82, S107, S110, S141, S147, and S189. The segment covering 35-77 has biased composition (low complexity); sequence GARAARFAAPVSGAQQPSASAGAAAAAAAAASAPAAPRSRSLG. The RING-type; atypical zinc finger occupies 195 to 236; the sequence is CAICLEELQQGDTIARLPCLCIYHKGCIDEWFEVNRSCPEHP.

Interacts with UBE2N. Interacts with ZNRF1. Interacts (when phosphorylated) with YWHAE. Post-translationally, phosphorylated; leading to binding to YWHAE. Phosphorylated by MTOR at Ser-147 and dephosphorylated by PP6C. Ser-147 phosphorylation stimulates vesicle-to-cytosol translocation. Expressed primarily in the nervous system. Expression is more intense in the granular cell layer of hippocampus, Purkinje cell layer of the cerebellum and the granular cell layer of the olfactory bulb. Detected in sensory neurons but not expressed in sympatic or enteric neurons. Expressed in testis, adipose tissue, columnar epithelial cells of the gut.

It localises to the endosome membrane. Its subcellular location is the lysosome membrane. The protein localises to the presynaptic cell membrane. It is found in the cytoplasm. It carries out the reaction S-ubiquitinyl-[E2 ubiquitin-conjugating enzyme]-L-cysteine + [acceptor protein]-L-lysine = [E2 ubiquitin-conjugating enzyme]-L-cysteine + N(6)-ubiquitinyl-[acceptor protein]-L-lysine.. It functions in the pathway protein modification; protein ubiquitination. In terms of biological role, E3 ubiquitin-protein ligase that plays a role in the establishment and maintenance of neuronal transmission and plasticity. Ubiquitinates the Na(+)/K(+) ATPase alpha-1 subunit/ATP1A1 and thereby influences its endocytosis and/or degradation. Also acts as a positive regulator of mTORC1 activation by amino acids, which functions upstream of the V-ATPase and of Rag-GTPases. In turn, phosphorylation by mTOR leads to its inhibition via targeting to the cytosol allowing a self-regulating feedback mechanism. In Mus musculus (Mouse), this protein is E3 ubiquitin-protein ligase ZNRF2 (Znrf2).